Consider the following 31-residue polypeptide: Photosystem I reaction center subunit XII (31 aa).

A helical transmembrane segment spans residues 7–26 (QISIILLIALIPAFFSLKLG).

This sequence belongs to the PsaM family.

It is found in the plastid. The protein resides in the chloroplast thylakoid membrane. The chain is Photosystem I reaction center subunit XII from Euglena myxocylindracea.